A 697-amino-acid chain; its full sequence is Methionine--tRNA ligase (697 aa).

The 'HIGH' region signature appears at 12 to 22; the sequence is PYANGHFHIGH. The Zn(2+) site is built by Cys143, Cys146, Cys156, and Cys159. The short motif at 342 to 346 is the 'KMSKS' region element; sequence KMSKS. Lys345 contacts ATP. The segment at 557 to 577 is disordered; it reads FEPPAEPSPQTSPAAAGAGAV. The tRNA-binding domain occupies 591 to 697; it reads DFTKIDLRLA…PGAVPGLRVR (107 aa).

This sequence belongs to the class-I aminoacyl-tRNA synthetase family. MetG type 1 subfamily. Homodimer. Requires Zn(2+) as cofactor.

It localises to the cytoplasm. The catalysed reaction is tRNA(Met) + L-methionine + ATP = L-methionyl-tRNA(Met) + AMP + diphosphate. Is required not only for elongation of protein synthesis but also for the initiation of all mRNA translation through initiator tRNA(fMet) aminoacylation. In Methylibium petroleiphilum (strain ATCC BAA-1232 / LMG 22953 / PM1), this protein is Methionine--tRNA ligase.